Reading from the N-terminus, the 676-residue chain is Pentatricopeptide repeat-containing protein ATP4 homolog, chloroplastic (676 aa).

A chloroplast-targeting transit peptide spans 1-73 (MASPSSLLSW…NSPRAAGLAR (73 aa)). The tract at residues 17–58 (LSFQPKNPSPSPATARVSVQDPPPPPSDANPSPGRSSNTSRY) is disordered. 10 PPR repeats span residues 148–182 (EVIL…GVQP), 183–217 (DNAT…GCSP), 218–252 (DMLT…KWQL), 253–287 (DPVI…GVKP), 288–322 (NLVV…EAVP), 323–353 (NKAT…MKDE), 358–388 (DVVL…MKAS), 396–430 (DSWS…GFKP), 431–465 (NIFI…GITP), and 532–566 (RMPY…GIYS). The Smr domain maps to 578–662 (LHLRGLSVGA…WFLTTSVAAR (85 aa)).

It belongs to the PPR family. P subfamily.

The protein resides in the plastid. Its subcellular location is the chloroplast. Involved in translation and accumulation of chloroplast ATP synthase subunits. This chain is Pentatricopeptide repeat-containing protein ATP4 homolog, chloroplastic, found in Oryza sativa subsp. japonica (Rice).